The following is a 459-amino-acid chain: Chromosomal replication initiator protein DnaA (459 aa).

A domain I, interacts with DnaA modulators region spans residues 1–74; it reads MQKIETFWYF…DEMAQGHFNE (74 aa). Residues 74 to 122 form a domain II region; the sequence is EKIHFKLELKDPAEIKTATIKAPEPKSKEDKKPPTDKAHGTTARKTNPS. The tract at residues 91 to 123 is disordered; that stretch reads ATIKAPEPKSKEDKKPPTDKAHGTTARKTNPSR. Basic and acidic residues predominate over residues 96-112; the sequence is PEPKSKEDKKPPTDKAH. A domain III, AAA+ region region spans residues 123–339; sequence RLNPAFTFDA…GALKRVLAYS (217 aa). ATP is bound by residues Gly-167, Gly-169, Lys-170, and Thr-171. The interval 340–459 is domain IV, binds dsDNA; that stretch reads RFTGHPISLD…YSTLIHILRG (120 aa).

This sequence belongs to the DnaA family. In terms of assembly, oligomerizes as a right-handed, spiral filament on DNA at oriC.

It is found in the cytoplasm. In terms of biological role, plays an essential role in the initiation and regulation of chromosomal replication. ATP-DnaA binds to the origin of replication (oriC) to initiate formation of the DNA replication initiation complex once per cell cycle. Binds the DnaA box (a 9 base pair repeat at the origin) and separates the double-stranded (ds)DNA. Forms a right-handed helical filament on oriC DNA; dsDNA binds to the exterior of the filament while single-stranded (ss)DNA is stabiized in the filament's interior. The ATP-DnaA-oriC complex binds and stabilizes one strand of the AT-rich DNA unwinding element (DUE), permitting loading of DNA polymerase. After initiation quickly degrades to an ADP-DnaA complex that is not apt for DNA replication. Binds acidic phospholipids. The sequence is that of Chromosomal replication initiator protein DnaA from Nitrosomonas eutropha (strain DSM 101675 / C91 / Nm57).